A 312-amino-acid chain; its full sequence is DNA-directed RNA polymerase subunit alpha (312 aa).

Residues 1–225 form an alpha N-terminal domain (alpha-NTD) region; it reads MIEFEKPNIT…VEHFKVFESA (225 aa). Positions 243 to 312 are alpha C-terminal domain (alpha-CTD); that stretch reads KEKKLEMTIE…DLGLSLRQED (70 aa).

Belongs to the RNA polymerase alpha chain family. As to quaternary structure, homodimer. The RNAP catalytic core consists of 2 alpha, 1 beta, 1 beta' and 1 omega subunit. When a sigma factor is associated with the core the holoenzyme is formed, which can initiate transcription.

The enzyme catalyses RNA(n) + a ribonucleoside 5'-triphosphate = RNA(n+1) + diphosphate. In terms of biological role, DNA-dependent RNA polymerase catalyzes the transcription of DNA into RNA using the four ribonucleoside triphosphates as substrates. The sequence is that of DNA-directed RNA polymerase subunit alpha from Lactobacillus helveticus (strain DPC 4571).